The chain runs to 438 residues: Serine/threonine exchanger SteT (438 aa).

Topologically, residues 1 to 11 (MHTEDNGLKKE) are cytoplasmic. Residues 12-32 (IGLLFALTLVIGTIIGSGVFM) form a helical membrane-spanning segment. Residues 33-45 (KPGAVLAYSGDSK) are Extracellular-facing. A helical membrane pass occupies residues 46–66 (MALFAWLLGGILTLAGGLTIA). Residues 67 to 98 (EIGTQIPKTGGLYTYLEEVYGEFWGFLCGWVQ) lie on the Cytoplasmic side of the membrane. A helical transmembrane segment spans residues 99–119 (IIIYGPAIIGALGLYFGSLMA). Over 120 to 126 (NLFGWGS) the chain is Extracellular. The helical transmembrane segment at 127–147 (GLSKVIGIIAVLFLCVINIIG) threads the bilayer. At 148–151 (TKYG) the chain is on the cytoplasmic side. The helical transmembrane segment at 152 to 172 (GFVQTLTTIGKLIPIACIIVF) threads the bilayer. Residues 173–193 (GLWKGDQHIFTAVNESISDMN) lie on the Extracellular side of the membrane. A helical membrane pass occupies residues 194–214 (FGAAILATLFAYDGWILLAAL). At 215 to 230 (GGEMKNPEKLLPRAMT) the chain is on the cytoplasmic side. The chain crosses the membrane as a helical span at residues 231–251 (GGLLIVTAIYIFINFALLHIL). At 252 to 269 (SANEIVTLGENATSTAAT) the chain is on the extracellular side. The chain crosses the membrane as a helical span at residues 270–290 (MLFGSIGGKLISVGIIVSIFG). At 291–327 (CLNGKVLSFPRVSFAMAERKQLPFAEKLSHVHPSFRT) the chain is on the cytoplasmic side. The chain crosses the membrane as a helical span at residues 328–348 (PWIAISFQIALALIMMLISNP). Topologically, residues 349–352 (DKLS) are extracellular. Residues 353-373 (EISIFMIYIFYVMAFFAVFIL) traverse the membrane as a helical segment. Residues 374-388 (RKRAKGEKRAYSVPL) are Cytoplasmic-facing. Residues 389–409 (YPFMPILAIAGSFFVLGSTLI) traverse the membrane as a helical segment. Over 410–411 (TD) the chain is Extracellular. The chain crosses the membrane as a helical span at residues 412-432 (TMSCGLSILIGLAGLPVYYGM). The Cytoplasmic segment spans residues 433–438 (KKRKAS).

This sequence belongs to the amino acid-polyamine-organocation (APC) superfamily. L-type amino acid transporter (LAT) (TC 2.A.3.8) family. Monomer.

Its subcellular location is the cell membrane. In terms of biological role, exhibits an obligate exchange activity for serine, threonine and aromatic amino acids. This Bacillus subtilis (strain 168) protein is Serine/threonine exchanger SteT (steT).